Consider the following 213-residue polypeptide: Large ribosomal subunit protein uL1 (213 aa).

This sequence belongs to the universal ribosomal protein uL1 family. Part of the 50S ribosomal subunit.

In terms of biological role, binds directly to 23S rRNA. Probably involved in E site tRNA release. Functionally, protein L1 is also a translational repressor protein, it controls the translation of its operon by binding to its mRNA. The polypeptide is Large ribosomal subunit protein uL1 (Methanoculleus marisnigri (strain ATCC 35101 / DSM 1498 / JR1)).